We begin with the raw amino-acid sequence, 204 residues long: Glycerol-3-phosphate acyltransferase (204 aa).

5 consecutive transmembrane segments (helical) span residues 8–28 (ILIFAYLLGSINSAIIVCYIF), 53–73 (VPAAITLIFDILKGLVPVVIA), 81–101 (FITACTALYAILGHIFPIFFG), 116–136 (FGFSWILGLIFVITWLCVAII), and 155–175 (VIFTSDLQVAAPFLIIAIIIL).

Belongs to the PlsY family. In terms of assembly, probably interacts with PlsX.

It localises to the cell inner membrane. The catalysed reaction is an acyl phosphate + sn-glycerol 3-phosphate = a 1-acyl-sn-glycero-3-phosphate + phosphate. The protein operates within lipid metabolism; phospholipid metabolism. Catalyzes the transfer of an acyl group from acyl-phosphate (acyl-PO(4)) to glycerol-3-phosphate (G3P) to form lysophosphatidic acid (LPA). This enzyme utilizes acyl-phosphate as fatty acyl donor, but not acyl-CoA or acyl-ACP. The chain is Glycerol-3-phosphate acyltransferase from Francisella tularensis subsp. novicida (strain U112).